A 268-amino-acid polypeptide reads, in one-letter code: NADH-quinone oxidoreductase subunit B 2 (268 aa).

[4Fe-4S] cluster contacts are provided by cysteine 42, cysteine 43, cysteine 108, and cysteine 138. Residues 237–268 (SPNKAKGVAPEIRHNDLKRPAVEVDHARDEQR) are disordered. Residues 247-268 (EIRHNDLKRPAVEVDHARDEQR) show a composition bias toward basic and acidic residues.

It belongs to the complex I 20 kDa subunit family. As to quaternary structure, NDH-1 is composed of 14 different subunits. Subunits NuoB, C, D, E, F, and G constitute the peripheral sector of the complex. Requires [4Fe-4S] cluster as cofactor.

The protein resides in the cell membrane. It catalyses the reaction a quinone + NADH + 5 H(+)(in) = a quinol + NAD(+) + 4 H(+)(out). NDH-1 shuttles electrons from NADH, via FMN and iron-sulfur (Fe-S) centers, to quinones in the respiratory chain. The immediate electron acceptor for the enzyme in this species is believed to be ubiquinone. Couples the redox reaction to proton translocation (for every two electrons transferred, four hydrogen ions are translocated across the cytoplasmic membrane), and thus conserves the redox energy in a proton gradient. This chain is NADH-quinone oxidoreductase subunit B 2, found in Roseiflexus castenholzii (strain DSM 13941 / HLO8).